The primary structure comprises 301 residues: Nucleotide-binding protein Noca_2527 (301 aa).

26-33 (GMTGAGRS) provides a ligand contact to ATP. GTP is bound at residue 77–80 (DVRS).

This sequence belongs to the RapZ-like family.

Displays ATPase and GTPase activities. The sequence is that of Nucleotide-binding protein Noca_2527 from Nocardioides sp. (strain ATCC BAA-499 / JS614).